Reading from the N-terminus, the 222-residue chain is Glutathione S-transferase A2 (222 aa).

Alanine 2 bears the N-acetylalanine mark. Positions 3-83 constitute a GST N-terminal domain; that stretch reads EKPKLHYSNI…YIASKYNLYG (81 aa). Position 4 is an N6-succinyllysine (lysine 4). Glutathione-binding positions include tyrosine 9, arginine 45, 54-55, and 67-68; these read QV and QT. A GST C-terminal domain is found at 85-207; the sequence is DIKEKALIDM…LQPGSPRKPP (123 aa). The interval 199 to 222 is disordered; sequence QPGSPRKPPMDEKSLEESRKIFRF. Over residues 206-222 the composition is skewed to basic and acidic residues; sequence PPMDEKSLEESRKIFRF.

It belongs to the GST superfamily. Alpha family. As to quaternary structure, homodimer or heterodimer of GSTA1 and GSTA2. As to expression, liver.

The protein localises to the cytoplasm. It carries out the reaction RX + glutathione = an S-substituted glutathione + a halide anion + H(+). Its function is as follows. Catalyzes the conjugation of glutathione to a large variety of electrophilic compounds. In Homo sapiens (Human), this protein is Glutathione S-transferase A2 (GSTA2).